The sequence spans 113 residues: T cell receptor alpha variable 8-6 (113 aa).

The signal sequence occupies residues 1–20 (MLLLLVPAFQVIFTLGGTRA). In terms of domain architecture, Ig-like spans 21 to 113 (QSVTQLDSQV…DTAEYFCAVS (93 aa)). Cys42 and Cys110 are disulfide-bonded. N-linked (GlcNAc...) asparagine glycosylation is found at Asn43 and Asn87.

In terms of assembly, alpha-beta TR is a heterodimer composed of an alpha and beta chain; disulfide-linked. The alpha-beta TR is associated with the transmembrane signaling CD3 coreceptor proteins to form the TR-CD3 (TcR or TCR). The assembly of alpha-beta TR heterodimers with CD3 occurs in the endoplasmic reticulum where a single alpha-beta TR heterodimer associates with one CD3D-CD3E heterodimer, one CD3G-CD3E heterodimer and one CD247 homodimer forming a stable octameric structure. CD3D-CD3E and CD3G-CD3E heterodimers preferentially associate with TR alpha and TR beta chains, respectively. The association of the CD247 homodimer is the last step of TcR assembly in the endoplasmic reticulum and is required for transport to the cell surface.

It localises to the cell membrane. V region of the variable domain of T cell receptor (TR) alpha chain that participates in the antigen recognition. Alpha-beta T cell receptors are antigen specific receptors which are essential to the immune response and are present on the cell surface of T lymphocytes. Recognize peptide-major histocompatibility (MH) (pMH) complexes that are displayed by antigen presenting cells (APC), a prerequisite for efficient T cell adaptive immunity against pathogens. Binding of alpha-beta TR to pMH complex initiates TR-CD3 clustering on the cell surface and intracellular activation of LCK that phosphorylates the ITAM motifs of CD3G, CD3D, CD3E and CD247 enabling the recruitment of ZAP70. In turn ZAP70 phosphorylates LAT, which recruits numerous signaling molecules to form the LAT signalosome. The LAT signalosome propagates signal branching to three major signaling pathways, the calcium, the mitogen-activated protein kinase (MAPK) kinase and the nuclear factor NF-kappa-B (NF-kB) pathways, leading to the mobilization of transcription factors that are critical for gene expression and essential for T cell growth and differentiation. The T cell repertoire is generated in the thymus, by V-(D)-J rearrangement. This repertoire is then shaped by intrathymic selection events to generate a peripheral T cell pool of self-MH restricted, non-autoaggressive T cells. Post-thymic interaction of alpha-beta TR with the pMH complexes shapes TR structural and functional avidity. The sequence is that of T cell receptor alpha variable 8-6 from Homo sapiens (Human).